The chain runs to 300 residues: Acetyl-coenzyme A carboxylase carboxyl transferase subunit beta 2 (300 aa).

Residues 26–294 (VWVKCPSCRE…SGAYSSEAVA (269 aa)) enclose the CoA carboxyltransferase N-terminal domain. Residues C30, C33, C49, and C51 each contribute to the Zn(2+) site. The C4-type zinc finger occupies 30–51 (CPSCRELIYHKQLAERMKVCRC).

It belongs to the AccD/PCCB family. In terms of assembly, acetyl-CoA carboxylase is a heterohexamer composed of biotin carboxyl carrier protein (AccB), biotin carboxylase (AccC) and two subunits each of ACCase subunit alpha (AccA) and ACCase subunit beta (AccD). Zn(2+) is required as a cofactor.

The protein localises to the cytoplasm. It catalyses the reaction N(6)-carboxybiotinyl-L-lysyl-[protein] + acetyl-CoA = N(6)-biotinyl-L-lysyl-[protein] + malonyl-CoA. It participates in lipid metabolism; malonyl-CoA biosynthesis; malonyl-CoA from acetyl-CoA: step 1/1. Component of the acetyl coenzyme A carboxylase (ACC) complex. Biotin carboxylase (BC) catalyzes the carboxylation of biotin on its carrier protein (BCCP) and then the CO(2) group is transferred by the transcarboxylase to acetyl-CoA to form malonyl-CoA. The protein is Acetyl-coenzyme A carboxylase carboxyl transferase subunit beta 2 of Roseiflexus castenholzii (strain DSM 13941 / HLO8).